Here is a 508-residue protein sequence, read N- to C-terminus: Heat shock 70 kDa protein 14 (508 aa).

It belongs to the heat shock protein 70 family. In terms of assembly, component of ribosome-associated complex (RAC).

It localises to the cytoplasm. Its subcellular location is the cytosol. Functionally, component of the ribosome-associated complex (RAC), a complex involved in folding or maintaining nascent polypeptides in a folding-competent state. This is Heat shock 70 kDa protein 14 (hspa14) from Xenopus tropicalis (Western clawed frog).